Here is a 209-residue protein sequence, read N- to C-terminus: Uracil phosphoribosyltransferase (209 aa).

5-phospho-alpha-D-ribose 1-diphosphate-binding positions include Arg-79, Arg-104, and 131-139 (DPMLATGGS). Residues Ile-194 and 199–201 (GDA) each bind uracil. Residue Asp-200 coordinates 5-phospho-alpha-D-ribose 1-diphosphate.

Belongs to the UPRTase family. It depends on Mg(2+) as a cofactor.

The enzyme catalyses UMP + diphosphate = 5-phospho-alpha-D-ribose 1-diphosphate + uracil. The protein operates within pyrimidine metabolism; UMP biosynthesis via salvage pathway; UMP from uracil: step 1/1. With respect to regulation, allosterically activated by GTP. Functionally, catalyzes the conversion of uracil and 5-phospho-alpha-D-ribose 1-diphosphate (PRPP) to UMP and diphosphate. This is Uracil phosphoribosyltransferase from Streptococcus mutans serotype c (strain ATCC 700610 / UA159).